Reading from the N-terminus, the 545-residue chain is Mesoderm induction early response protein 2 (545 aa).

Phosphoserine is present on serine 11. Residues 100 to 189 (DPISDRESEG…SSDTEEDSLP (90 aa)) form a disordered region. Positions 140-153 (QSSADDLTPSVTSH) are enriched in polar residues. One can recognise an ELM2 domain in the interval 195–292 (KEIMVGPQFQ…EALRRLRFNV (98 aa)). Residues 297 to 349 (DGLCAWSEEECRNFEHGFRVHGKNFHLIQANKVRTRSVGECVEYYYLWKKSER) enclose the SANT domain. Residues 364-464 (YVPSGTTDAD…YQPAVTAPEP (101 aa)) are disordered.

In terms of assembly, part of a complex containing at least CDYL, MIER1, MIER2, HDAC1 and HDAC2.

The protein localises to the nucleus. In terms of biological role, transcriptional repressor. In Homo sapiens (Human), this protein is Mesoderm induction early response protein 2 (MIER2).